Here is a 728-residue protein sequence, read N- to C-terminus: 1,4-alpha-glucan branching enzyme GlgB (728 aa).

Asp405 serves as the catalytic Nucleophile. The active-site Proton donor is Glu458.

This sequence belongs to the glycosyl hydrolase 13 family. GlgB subfamily. As to quaternary structure, monomer.

The catalysed reaction is Transfers a segment of a (1-&gt;4)-alpha-D-glucan chain to a primary hydroxy group in a similar glucan chain.. It participates in glycan biosynthesis; glycogen biosynthesis. Functionally, catalyzes the formation of the alpha-1,6-glucosidic linkages in glycogen by scission of a 1,4-alpha-linked oligosaccharide from growing alpha-1,4-glucan chains and the subsequent attachment of the oligosaccharide to the alpha-1,6 position. In Salmonella paratyphi B (strain ATCC BAA-1250 / SPB7), this protein is 1,4-alpha-glucan branching enzyme GlgB.